The chain runs to 338 residues: MTTLRLLISDSYDPWFNLAVEECIFRQMPATQRVLFLWRNADTVVIGRAQNPWKECNTRRMEEDNVRLARRSSGGGAVFHDLGNTCFTFMAGKPEYDKTISTHIVLAALNSLGVMADASGRNDLVVKTPDGDRKVSGSAYRETKDRGFHHGTLLLNADLSRLANYLNPDKKKLAAKGITSVRSRVANLTELLPGITHEQVCQAVTEAFFAHYGERVDAEVISPDKTPDLPNFAETFARQSSWEWNFGQAPAFSHLLDERFTWGGVELHFDVEKGVITRAQAFTDSLNPAPLEALAERLQGCLYRADKLQETCEALLVDFPEQEKELRELSAWIAEAVR.

Residues 29 to 216 (PATQRVLFLW…AFFAHYGERV (188 aa)) form the BPL/LPL catalytic domain. Residues arginine 71, 76 to 79 (GAVF), and lysine 134 each bind ATP. Residue lysine 134 coordinates (R)-lipoate.

It belongs to the LplA family. As to quaternary structure, monomer.

The protein resides in the cytoplasm. It catalyses the reaction L-lysyl-[lipoyl-carrier protein] + (R)-lipoate + ATP = N(6)-[(R)-lipoyl]-L-lysyl-[lipoyl-carrier protein] + AMP + diphosphate + H(+). Its pathway is protein modification; protein lipoylation via exogenous pathway; protein N(6)-(lipoyl)lysine from lipoate: step 1/2. The protein operates within protein modification; protein lipoylation via exogenous pathway; protein N(6)-(lipoyl)lysine from lipoate: step 2/2. In terms of biological role, catalyzes both the ATP-dependent activation of exogenously supplied lipoate to lipoyl-AMP and the transfer of the activated lipoyl onto the lipoyl domains of lipoate-dependent enzymes. The polypeptide is Lipoate-protein ligase A (Salmonella typhimurium (strain LT2 / SGSC1412 / ATCC 700720)).